The sequence spans 660 residues: Threonine--tRNA ligase (660 aa).

Residues 1–49 (MPDSIVHVKKGQRFLDVIKDKNVVAVKIDSVLHDLRDVAERDVDAIPVS) form the TGS domain. The tract at residues 225–554 (DHRRIIAEMD…LLEHYAGKLP (330 aa)) is catalytic. Residues cysteine 318, histidine 369, and histidine 531 each coordinate Zn(2+).

The protein belongs to the class-II aminoacyl-tRNA synthetase family. In terms of assembly, homodimer. Zn(2+) serves as cofactor.

It is found in the cytoplasm. It carries out the reaction tRNA(Thr) + L-threonine + ATP = L-threonyl-tRNA(Thr) + AMP + diphosphate + H(+). Its function is as follows. Catalyzes the attachment of threonine to tRNA(Thr) in a two-step reaction: L-threonine is first activated by ATP to form Thr-AMP and then transferred to the acceptor end of tRNA(Thr). The sequence is that of Threonine--tRNA ligase from Thermoplasma acidophilum (strain ATCC 25905 / DSM 1728 / JCM 9062 / NBRC 15155 / AMRC-C165).